A 404-amino-acid chain; its full sequence is Cysteine desulfurase IscS (404 aa).

Residues 75–76, N155, Q183, and 203–205 each bind pyridoxal 5'-phosphate; these read AT and SAH. K206 is subject to N6-(pyridoxal phosphate)lysine. Position 243 (T243) interacts with pyridoxal 5'-phosphate. The Cysteine persulfide intermediate role is filled by C328. Position 328 (C328) interacts with [2Fe-2S] cluster.

It belongs to the class-V pyridoxal-phosphate-dependent aminotransferase family. NifS/IscS subfamily. As to quaternary structure, homodimer. Forms a heterotetramer with IscU, interacts with other sulfur acceptors. Pyridoxal 5'-phosphate is required as a cofactor.

The protein localises to the cytoplasm. It catalyses the reaction (sulfur carrier)-H + L-cysteine = (sulfur carrier)-SH + L-alanine. It participates in cofactor biosynthesis; iron-sulfur cluster biosynthesis. Master enzyme that delivers sulfur to a number of partners involved in Fe-S cluster assembly, tRNA modification or cofactor biosynthesis. Catalyzes the removal of elemental sulfur atoms from cysteine to produce alanine. Functions as a sulfur delivery protein for Fe-S cluster synthesis onto IscU, an Fe-S scaffold assembly protein, as well as other S acceptor proteins. The polypeptide is Cysteine desulfurase IscS (Proteus mirabilis (strain HI4320)).